A 241-amino-acid polypeptide reads, in one-letter code: uncharacterized protein (241 aa).

Disordered regions lie at residues 19 to 59, 101 to 139, and 152 to 182; these read ERDR…QQLG, VRRP…ASRS, and RGCR…KPCS. Over residues 34–48 the composition is skewed to gly residues; the sequence is ARGGRGLWTVGGGGS. Residues 49 to 58 are compositionally biased toward polar residues; sequence PTETAESQQL. Over residues 106–118 the composition is skewed to pro residues; it reads PSVPSPLPKPPVP.

This is an uncharacterized protein from Homo sapiens (Human).